The primary structure comprises 278 residues: Digeranylgeranylglyceryl phosphate synthase (278 aa).

7 consecutive transmembrane segments (helical) span residues 12-32, 34-54, 91-111, 142-162, 204-224, 226-246, and 257-277; these read LKNC…ASYF, ISMI…CGFG, LLVV…LMAV, VFIF…LFLC, FLLV…FFGI, YLIS…NLVM, and SRNI…GSLF.

It belongs to the UbiA prenyltransferase family. DGGGP synthase subfamily. Mg(2+) serves as cofactor.

It is found in the cell membrane. The enzyme catalyses sn-3-O-(geranylgeranyl)glycerol 1-phosphate + (2E,6E,10E)-geranylgeranyl diphosphate = 2,3-bis-O-(geranylgeranyl)-sn-glycerol 1-phosphate + diphosphate. It functions in the pathway membrane lipid metabolism; glycerophospholipid metabolism. Prenyltransferase that catalyzes the transfer of the geranylgeranyl moiety of geranylgeranyl diphosphate (GGPP) to the C2 hydroxyl of (S)-3-O-geranylgeranylglyceryl phosphate (GGGP). This reaction is the second ether-bond-formation step in the biosynthesis of archaeal membrane lipids. This Methanococcus maripaludis (strain C6 / ATCC BAA-1332) protein is Digeranylgeranylglyceryl phosphate synthase.